A 194-amino-acid chain; its full sequence is RNA polymerase II subunit A C-terminal domain phosphatase SSU72 like protein 2 (194 aa).

It belongs to the SSU72 phosphatase family.

Its subcellular location is the nucleus. The catalysed reaction is O-phospho-L-seryl-[protein] + H2O = L-seryl-[protein] + phosphate. The enzyme catalyses O-phospho-L-threonyl-[protein] + H2O = L-threonyl-[protein] + phosphate. Its function is as follows. Protein phosphatase that catalyzes the dephosphorylation of the C-terminal domain of RNA polymerase II. Plays a role in RNA processing and termination. The chain is RNA polymerase II subunit A C-terminal domain phosphatase SSU72 like protein 2 from Homo sapiens (Human).